The chain runs to 241 residues: Caffeoyl-CoA O-methyltransferase (241 aa).

K14 is a binding site for substrate. Residues T58, E80, 82–83 (GV), S88, D106, and A135 each bind S-adenosyl-L-methionine. D158 serves as a coordination point for substrate. D158 contacts a divalent metal cation. D160 lines the S-adenosyl-L-methionine pocket. Residues D184 and N185 each contribute to the a divalent metal cation site.

The protein belongs to the class I-like SAM-binding methyltransferase superfamily. Cation-dependent O-methyltransferase family. CCoAMT subfamily. It depends on a divalent metal cation as a cofactor.

The catalysed reaction is (E)-caffeoyl-CoA + S-adenosyl-L-methionine = (E)-feruloyl-CoA + S-adenosyl-L-homocysteine + H(+). Its pathway is aromatic compound metabolism; phenylpropanoid biosynthesis. Functionally, methylates caffeoyl-CoA to feruloyl-CoA and 5-hydroxyferuloyl-CoA to sinapoyl-CoA. Plays a role in the synthesis of feruloylated polysaccharides. Involved in the reinforcement of the plant cell wall. Also involved in the responding to wounding or pathogen challenge by the increased formation of cell wall-bound ferulic acid polymers. The polypeptide is Caffeoyl-CoA O-methyltransferase (Stellaria longipes (Longstalk starwort)).